A 365-amino-acid polypeptide reads, in one-letter code: Sulfate/thiosulfate import ATP-binding protein CysA (365 aa).

The region spanning 3-237 (IEIANIKKSF…PATRFVLEFM (235 aa)) is the ABC transporter domain. Residue 35–42 (GPSGSGKT) participates in ATP binding.

The protein belongs to the ABC transporter superfamily. Sulfate/tungstate importer (TC 3.A.1.6) family. In terms of assembly, the complex is composed of two ATP-binding proteins (CysA), two transmembrane proteins (CysT and CysW) and a solute-binding protein (CysP).

It is found in the cell inner membrane. The enzyme catalyses sulfate(out) + ATP + H2O = sulfate(in) + ADP + phosphate + H(+). It carries out the reaction thiosulfate(out) + ATP + H2O = thiosulfate(in) + ADP + phosphate + H(+). In terms of biological role, part of the ABC transporter complex CysAWTP involved in sulfate/thiosulfate import. Responsible for energy coupling to the transport system. This Shigella flexneri protein is Sulfate/thiosulfate import ATP-binding protein CysA.